The following is a 324-amino-acid chain: Delta-aminolevulinic acid dehydratase (324 aa).

Residues C118, C120, and C128 each contribute to the Zn(2+) site. The Schiff-base intermediate with substrate role is filled by K195. 5-aminolevulinate is bound by residues R205 and R217. Residue E233 participates in Mg(2+) binding. K248 serves as the catalytic Schiff-base intermediate with substrate. 5-aminolevulinate is bound by residues S274 and Y313.

It belongs to the ALAD family. As to quaternary structure, homooctamer. The cofactor is Zn(2+).

The enzyme catalyses 2 5-aminolevulinate = porphobilinogen + 2 H2O + H(+). The protein operates within porphyrin-containing compound metabolism; protoporphyrin-IX biosynthesis; coproporphyrinogen-III from 5-aminolevulinate: step 1/4. Its function is as follows. Catalyzes an early step in the biosynthesis of tetrapyrroles. Binds two molecules of 5-aminolevulinate per subunit, each at a distinct site, and catalyzes their condensation to form porphobilinogen. This chain is Delta-aminolevulinic acid dehydratase (hemB), found in Staphylococcus epidermidis (strain ATCC 12228 / FDA PCI 1200).